Consider the following 137-residue polypeptide: Gonadotropin subunit beta-1 (137 aa).

An N-terminal signal peptide occupies residues 1-24 (MYCTHLRMLQLVVMATLWVTPVRA). Intrachain disulfides connect Cys-32–Cys-78, Cys-46–Cys-93, Cys-55–Cys-108, Cys-59–Cys-110, and Cys-113–Cys-120. N-linked (GlcNAc...) asparagine glycosylation is present at Asn-36.

The protein belongs to the glycoprotein hormones subunit beta family. As to quaternary structure, heterodimer of an alpha and a beta chain.

It localises to the secreted. Functionally, involved in gametogenesis and steroidogenesis. The chain is Gonadotropin subunit beta-1 (cgba) from Coregonus autumnalis (Arctic cisco).